Reading from the N-terminus, the 183-residue chain is Outer membrane protein H.8 (183 aa).

Residues 1 to 17 form the signal peptide; the sequence is MKAYLALISAAVIGLAA. Residue Cys-18 is the site of N-palmitoyl cysteine attachment. A lipid anchor (S-diacylglycerol cysteine) is attached at Cys-18. A disordered region spans residues 27–51; the sequence is AEATPAGEAPASEAPAAEAAPADAA. One can recognise a Plastocyanin-like domain in the interval 57-183; sequence GNCAATVESN…LMNGKVTLVD (127 aa). Cu cation is bound by residues His-102, Cys-166, His-171, and Met-175.

Requires Cu cation as cofactor.

Its subcellular location is the cell outer membrane. The protein is Outer membrane protein H.8 of Neisseria gonorrhoeae.